The sequence spans 434 residues: MNLDSSASALSYQSGFGNEFASEALPGALPVGQNSPQKAPYGLYAELFSGTAFTMTRSEARRTWMYRIQPSAKHPAFAKLARQLAGGPLGEVTPNRLRWSPLQIPSEPTDFIDGLVAMVANSAAQKPAGISVYHYRANRSMERVFFNADGELLLVPELGRLRIVTELGMLDLEPLEIAVLPRGLKFRIELLDPQARGYVAENHGAPLRLPDLGPIGSNGLANPRDFLAPVAHYEDLRQPTTLVQKYLGELWGCELDHSPLNVVAWHGNNVPYKYDLRRFNTIGTVSFDHPDPSIFTVLTSPTSVPGLANLDFVIFPPRWMVAENTFRPPWFHRNLMNEFMGLIQGAYDAKAEGFLPGGASLHSCMSAHGPDGETCTKAINAQLQPAKIDNTMAFMFETSQVLRPSQFALECPELQNDYDACWASLPVTFNPNRR.

The active-site Proton acceptor is His-289. 2 residues coordinate Fe cation: His-332 and Glu-338. Homogentisate-binding residues include Tyr-347 and His-368. His-368 is a binding site for Fe cation.

The protein belongs to the homogentisate dioxygenase family. As to quaternary structure, hexamer; dimer of trimers. Requires Fe cation as cofactor.

The enzyme catalyses homogentisate + O2 = 4-maleylacetoacetate + H(+). The protein operates within amino-acid degradation; L-phenylalanine degradation; acetoacetate and fumarate from L-phenylalanine: step 4/6. Functionally, involved in the catabolism of homogentisate (2,5-dihydroxyphenylacetate or 2,5-OH-PhAc), a central intermediate in the degradation of phenylalanine and tyrosine. Catalyzes the oxidative ring cleavage of the aromatic ring of homogentisate to yield maleylacetoacetate. This Pseudomonas fluorescens (strain ATCC BAA-477 / NRRL B-23932 / Pf-5) protein is Homogentisate 1,2-dioxygenase.